The sequence spans 452 residues: Tubulin beta-2 chain (452 aa).

GTP is bound by residues glutamine 11, glutamate 72, serine 141, glycine 145, threonine 146, glycine 147, asparagine 207, and asparagine 229. Glutamate 72 serves as a coordination point for Mg(2+). The disordered stretch occupies residues 414–452 (AESNMNDPVAEYQQYQDATADDEEEYDDEAADDHHQYES). Residues 432-444 (TADDEEEYDDEAA) show a composition bias toward acidic residues.

Belongs to the tubulin family. Dimer of alpha and beta chains. A typical microtubule is a hollow water-filled tube with an outer diameter of 25 nm and an inner diameter of 15 nM. Alpha-beta heterodimers associate head-to-tail to form protofilaments running lengthwise along the microtubule wall with the beta-tubulin subunit facing the microtubule plus end conferring a structural polarity. Microtubules usually have 13 protofilaments but different protofilament numbers can be found in some organisms and specialized cells. Mg(2+) serves as cofactor.

It is found in the cytoplasm. The protein resides in the cytoskeleton. Functionally, tubulin is the major constituent of microtubules, a cylinder consisting of laterally associated linear protofilaments composed of alpha- and beta-tubulin heterodimers. Microtubules grow by the addition of GTP-tubulin dimers to the microtubule end, where a stabilizing cap forms. Below the cap, tubulin dimers are in GDP-bound state, owing to GTPase activity of alpha-tubulin. The protein is Tubulin beta-2 chain (TUBB2) of Solanum tuberosum (Potato).